We begin with the raw amino-acid sequence, 350 residues long: Ribonuclease H2 subunit B (350 aa).

Polar residues predominate over residues 134–151; sequence QDYSNSSDTGENQKSNSK. The disordered stretch occupies residues 134-153; that stretch reads QDYSNSSDTGENQKSNSKTN.

The protein belongs to the RNase H2 subunit B family. Highly divergent. As to quaternary structure, the RNase 2 complex is a heterotrimer composed of the catalytic subunit RNH201 and of the non-catalytic subunits RNH202 and RNH203.

Its subcellular location is the nucleus. Non catalytic subunit of RNase H2, an endonuclease that specifically degrades the RNA of RNA:DNA hybrids. Participates in DNA replication, possibly by mediating the removal of lagging-strand Okazaki fragment RNA primers during DNA replication. Mediates the excision of single ribonucleotides from DNA:RNA duplexes. This Saccharomyces cerevisiae (strain ATCC 204508 / S288c) (Baker's yeast) protein is Ribonuclease H2 subunit B (RNH202).